The following is a 233-amino-acid chain: Ribose-5-phosphate isomerase A (233 aa).

Residues 31 to 34, 87 to 90, and 100 to 103 contribute to the substrate site; these read SGST, DGAD, and KGGG. E109 serves as the catalytic Proton acceptor. K127 serves as a coordination point for substrate.

It belongs to the ribose 5-phosphate isomerase family. In terms of assembly, homodimer.

It catalyses the reaction aldehydo-D-ribose 5-phosphate = D-ribulose 5-phosphate. The protein operates within carbohydrate degradation; pentose phosphate pathway; D-ribose 5-phosphate from D-ribulose 5-phosphate (non-oxidative stage): step 1/1. In terms of biological role, catalyzes the reversible conversion of ribose-5-phosphate to ribulose 5-phosphate. The polypeptide is Ribose-5-phosphate isomerase A (Chlamydia caviae (strain ATCC VR-813 / DSM 19441 / 03DC25 / GPIC) (Chlamydophila caviae)).